The chain runs to 251 residues: Octanoyltransferase (251 aa).

A BPL/LPL catalytic domain is found at 56-237 (ADTGDEIWVV…RLIANLDGES (182 aa)). Residues 96–103 (RGGQITYH), 168–170 (ALG), and 181–183 (GLS) each bind substrate. The active-site Acyl-thioester intermediate is Cys-199.

Belongs to the LipB family.

It localises to the cytoplasm. The enzyme catalyses octanoyl-[ACP] + L-lysyl-[protein] = N(6)-octanoyl-L-lysyl-[protein] + holo-[ACP] + H(+). Its pathway is protein modification; protein lipoylation via endogenous pathway; protein N(6)-(lipoyl)lysine from octanoyl-[acyl-carrier-protein]: step 1/2. Functionally, catalyzes the transfer of endogenously produced octanoic acid from octanoyl-acyl-carrier-protein onto the lipoyl domains of lipoate-dependent enzymes. Lipoyl-ACP can also act as a substrate although octanoyl-ACP is likely to be the physiological substrate. This chain is Octanoyltransferase, found in Burkholderia ambifaria (strain MC40-6).